A 378-amino-acid polypeptide reads, in one-letter code: MNIWLSMLTTTGLGAIIGGFTNHLAIKMLFRPHRPMYIGKFQVPFTPGLIPKRRDELAVQLGKMVVEHLLTPEGIGKKLTNEEFQKGLIHWAQVEVDKVITNEQSLRHMLGKWDVAHVEKEATEKIEQVITEKIQAFLEEYYTYTWEQALPHSVHEKIENAIPNVSAFILKRAIHFFESEEGKSRLSRMIDDFFASRGALLNLVGMFLGNVSVVDRVQPEVIKFLGQDGTKQLLTDVLQKEWEKLKGRDVKELETFVEKEMIVSSILSAVKVEETVSKFLNQSVQQVCEPVRETIIEKVVPNAVTKGLKWGGENVESILNNLHLAEIVQQEVSTFSTERLEDLVLSITKNELKMITYLGALLGGMIGIVQGLLLLFLK.

The next 2 membrane-spanning stretches (helical) occupy residues 1–21 (MNIWLSMLTTTGLGAIIGGFT) and 357–377 (YLGALLGGMIGIVQGLLLLFL).

The protein belongs to the UPF0754 family.

It localises to the cell membrane. This Bacillus cereus (strain AH820) protein is UPF0754 membrane protein BCAH820_0954.